We begin with the raw amino-acid sequence, 40 residues long: 67 kDa serum albumin (40 aa).

The Albumin domain occupies 1 to 40 (DAEHKSEIVHRFNDLKEEKFKGAALITFAQFLHKKPEEEA). H4 is a Cu cation binding site.

Belongs to the ALB/AFP/VDB family. Plasma.

It localises to the secreted. In terms of biological role, serum albumin, the main protein of plasma, has a good binding capacity for water, Ca(2+), Na(+), K(+), fatty acids, hormones, bilirubin and drugs. Its main function is the regulation of the colloidal osmotic pressure of blood. The polypeptide is 67 kDa serum albumin (Trachemys scripta (Red-eared slider turtle)).